We begin with the raw amino-acid sequence, 753 residues long: Dolichyl-phosphate-mannose--protein mannosyltransferase 3 (753 aa).

Topologically, residues 1–50 (MPYRVATGYSEKSTDDDLIWRTPIVKEELEDADNFLKDDAELYDKVKNES) are cytoplasmic. The chain crosses the membrane as a helical span at residues 51-71 (AVSHLDTIVMPIIFTVLGMFT). The Lumenal segment spans residues 72–148 (RMYKIGRNNH…IDYVKMRLFQ (77 aa)). Asn124 carries an N-linked (GlcNAc...) asparagine glycan. The helical transmembrane segment at 149 to 169 (AMFSSLCVPLAYFTGRAIGFS) threads the bilayer. The Cytoplasmic segment spans residues 170 to 174 (RLSVW). The chain crosses the membrane as a helical span at residues 175 to 195 (LFTILVIFENSYATLGKFILL). At 196–235 (DSMLLFFTVSSYFCLAKFHTMRKSPFSARWWLWLCLTGLN) the chain is on the lumenal side. The helical transmembrane segment at 236–256 (LGCAISVKMVGLFIISVVGIY) threads the bilayer. Over 257–282 (TISELWNLLSDRSVSWKVYVNHWLAR) the chain is Cytoplasmic. A helical membrane pass occupies residues 283–303 (IFGLIIIPVCVFLLCFKIHFD). The Lumenal portion of the chain corresponds to 304–602 (LLSNSGPGDS…IKYFLLGSPA (299 aa)). Asn324 carries N-linked (GlcNAc...) asparagine glycosylation. Residues 332-387 (PRDVALGSSIISIKNQALGGALLHSHVQPFPEGSEQQQVTVYGYSDANNEWFFQRI) form the MIR 1 domain. An N-linked (GlcNAc...) asparagine glycan is attached at Asn398. MIR domains are found at residues 401 to 457 (IEFV…IEIV) and 465 to 523 (PTLL…IETH). Residues 603 to 623 (SVWPSSIAVCALIIHVIFLTL) traverse the membrane as a helical segment. Residues 624–639 (KWQRQCVILSDPVERD) lie on the Cytoplasmic side of the membrane. The chain crosses the membrane as a helical span at residues 640–660 (VFVMAAFYPLLAWLLHYMPFV). Residues 661–665 (VMSRV) are Lumenal-facing. The helical transmembrane segment at 666-686 (VYAHHYLPTLYFALMILSYYF) threads the bilayer. Residues 687–703 (DMITKRWATRNTGKFLR) are Cytoplasmic-facing. The helical transmembrane segment at 704-724 (LGAYIVYGSIVIAGFFYFSPF) threads the bilayer. The Lumenal portion of the chain corresponds to 725-753 (SFGMDGPVDDYAYLAWLPTWQIVEDIRNT).

It belongs to the glycosyltransferase 39 family. As to quaternary structure, PMT3 and PMT5 form a functional heterodimer. Also forms a minor complex with PMT1.

The protein localises to the endoplasmic reticulum membrane. The enzyme catalyses a di-trans,poly-cis-dolichyl beta-D-mannosyl phosphate + L-seryl-[protein] = 3-O-(alpha-D-mannosyl)-L-seryl-[protein] + a di-trans,poly-cis-dolichyl phosphate + H(+). The catalysed reaction is a di-trans,poly-cis-dolichyl beta-D-mannosyl phosphate + L-threonyl-[protein] = 3-O-(alpha-D-mannosyl)-L-threonyl-[protein] + a di-trans,poly-cis-dolichyl phosphate + H(+). Its pathway is protein modification; protein glycosylation. Functionally, protein O-mannosyltransferase involved in O-glycosylation which is essential for cell wall rigidity. Forms a heterodimeric complex with PMT5 and more rarely with PMT1 to transfer mannose from Dol-P-mannose to Ser or Thr residues on proteins. Seems to have redundant activity to PMT2. The sequence is that of Dolichyl-phosphate-mannose--protein mannosyltransferase 3 from Saccharomyces cerevisiae (strain ATCC 204508 / S288c) (Baker's yeast).